A 193-amino-acid chain; its full sequence is Molybdopterin synthase catalytic subunit (193 aa).

Residues 118-119 (HR), Lys-134, and 141-143 (KKE) each bind substrate. The interval 159 to 193 (DRTTTDGTTASSPAPATRPAKGGGCCGRKVRVNES) is disordered. The segment covering 163-178 (TDGTTASSPAPATRPA) has biased composition (low complexity).

Belongs to the MoaE family. MOCS2B subfamily. As to quaternary structure, heterotetramer; composed of 2 small (MOCS2A) and 2 large (MOCS2B) subunits.

The protein localises to the cytoplasm. It catalyses the reaction 2 [molybdopterin-synthase sulfur-carrier protein]-C-terminal-Gly-aminoethanethioate + cyclic pyranopterin phosphate + H2O = molybdopterin + 2 [molybdopterin-synthase sulfur-carrier protein]-C-terminal Gly-Gly + 2 H(+). It functions in the pathway cofactor biosynthesis; molybdopterin biosynthesis. In terms of biological role, catalytic subunit of the molybdopterin synthase complex, a complex that catalyzes the conversion of precursor Z into molybdopterin. Acts by mediating the incorporation of 2 sulfur atoms from thiocarboxylated MOCS2A into precursor Z to generate a dithiolene group. The chain is Molybdopterin synthase catalytic subunit from Oryza sativa subsp. japonica (Rice).